A 91-amino-acid polypeptide reads, in one-letter code: Cell division topological specificity factor (91 aa).

The protein belongs to the MinE family.

Functionally, prevents the cell division inhibition by proteins MinC and MinD at internal division sites while permitting inhibition at polar sites. This ensures cell division at the proper site by restricting the formation of a division septum at the midpoint of the long axis of the cell. This chain is Cell division topological specificity factor, found in Chloroflexus aurantiacus (strain ATCC 29366 / DSM 635 / J-10-fl).